A 255-amino-acid chain; its full sequence is 5'-nucleotidase SurE (255 aa).

A divalent metal cation contacts are provided by Asp-8, Asp-9, Ser-40, and Asn-93.

Belongs to the SurE nucleotidase family. It depends on a divalent metal cation as a cofactor.

The protein localises to the cytoplasm. The catalysed reaction is a ribonucleoside 5'-phosphate + H2O = a ribonucleoside + phosphate. Nucleotidase that shows phosphatase activity on nucleoside 5'-monophosphates. This Bradyrhizobium sp. (strain BTAi1 / ATCC BAA-1182) protein is 5'-nucleotidase SurE.